Consider the following 358-residue polypeptide: D-xylulose reductase A (358 aa).

3 residues coordinate Zn(2+): cysteine 47, histidine 72, and glutamate 73. 182 to 187 (GAGPVG) serves as a coordination point for NAD(+).

Belongs to the zinc-containing alcohol dehydrogenase family. The cofactor is Zn(2+).

The enzyme catalyses xylitol + NAD(+) = D-xylulose + NADH + H(+). It participates in carbohydrate degradation; L-arabinose degradation via L-arabinitol; D-xylulose 5-phosphate from L-arabinose (fungal route): step 4/5. Functionally, xylitol dehydrogenase which catalyzes the conversion of xylitol to D-xylulose. Xylose is a major component of hemicelluloses such as xylan. Most fungi utilize D-xylose via three enzymatic reactions, xylose reductase (XR), xylitol dehydrogenase (XDH), and xylulokinase, to form xylulose 5-phosphate, which enters pentose phosphate pathway. This is D-xylulose reductase A (xdhA) from Aspergillus oryzae (strain ATCC 42149 / RIB 40) (Yellow koji mold).